A 530-amino-acid polypeptide reads, in one-letter code: Protein SLOW WALKER 1 (530 aa).

WD repeat units follow at residues 50-89 (NLVS…SSRR), 91-130 (SFRD…ALRT), 133-173 (SHSA…VISD), 176-216 (GHKD…SNWI), 220-258 (NHGL…KMVC), 262-304 (SHNK…VTYS), and 320-363 (GSTR…DESR). The Nuclear localization signal signature appears at 392 to 399 (EKKGLKLT).

In terms of tissue distribution, expressed in cells undergoing active cell divisions, including functional megaspores and the female gametophytic cells. Accumulates in roots, stems, leaves, inflorescences and siliques.

Its subcellular location is the nucleus. It localises to the nucleolus. Essential protein required for nuclear division and organization during embryo sac development in female gametophyte, probably by promoting rRNA biogenesis essential for the progression of the mitotic division cycles during gametogenesis. Involved in nucleolar processing of pre-18S ribosomal RNA. This chain is Protein SLOW WALKER 1, found in Arabidopsis thaliana (Mouse-ear cress).